The chain runs to 576 residues: 60 kDa heat shock protein homolog 2, mitochondrial (576 aa).

The transit peptide at Met-1 to Asn-61 directs the protein to the mitochondrion.

Belongs to the chaperonin (HSP60) family. In terms of tissue distribution, first detectable expression is seen in the posterior part of the dorsal tracheal trunk at stage 14-15, which marks the beginning of terminal tracheation. In the larval gut, expression in proventriculus is stronger than in midgut and hindgut. Malpighian tubules shows low expression and late third instar larval imaginal disks and brain showed moderate expression. In larval ovary and testis, expression is strong in the posterior region.

The protein localises to the mitochondrion matrix. In terms of biological role, prevents misfolding and promotes the refolding and proper assembly of unfolded polypeptides generated under stress conditions. Essential for proper development of trachea, spermatogonia and spermatocytes. This chain is 60 kDa heat shock protein homolog 2, mitochondrial (Hsp60C), found in Drosophila melanogaster (Fruit fly).